Consider the following 141-residue polypeptide: Large ribosomal subunit protein uL11 (141 aa).

The protein belongs to the universal ribosomal protein uL11 family. As to quaternary structure, part of the ribosomal stalk of the 50S ribosomal subunit. Interacts with L10 and the large rRNA to form the base of the stalk. L10 forms an elongated spine to which L12 dimers bind in a sequential fashion forming a multimeric L10(L12)X complex. In terms of processing, one or more lysine residues are methylated.

In terms of biological role, forms part of the ribosomal stalk which helps the ribosome interact with GTP-bound translation factors. This is Large ribosomal subunit protein uL11 from Prochlorococcus marinus (strain MIT 9313).